A 214-amino-acid chain; its full sequence is Cytolysin tenebrosin-B (214 aa).

The signal sequence occupies residues 1-19; sequence MNRLIIVFIVVTMICAATA. Residues 20–35 constitute a propeptide that is removed on maturation; it reads LSTKRRINKEEKDEKR. Positions 38 to 47 are plays an important role in the hemolytic activity; it reads AVAGAVIEGA. An N-terminal region region spans residues 46 to 65; the sequence is GATLTFNVLQTVLKALGDIS. 7 residues coordinate phosphocholine: Ser-89, Val-122, Ser-140, Pro-142, Tyr-168, Tyr-172, and Tyr-173. Positions 140–155 are trp-rich region, which is important for the binding to lipid membrane; it reads SIPFDYNLYSNWWNVK. The short motif at 179–181 is the Cell attachment site, crucial for protein stability element; the sequence is RGD.

It belongs to the actinoporin family. Sea anemone subfamily. As to quaternary structure, octamer or nonamer in membranes. Monomer in the soluble state.

The protein resides in the secreted. The protein localises to the nematocyst. Its subcellular location is the target cell membrane. In terms of biological role, pore-forming protein that forms cations-selective hydrophilic pores of around 1 nm and causes cardiac stimulation and cytolysis. Pore formation is a multi-step process that involves specific recognition of membrane sphingomyelin (but neither cholesterol nor phosphatidylcholine) using aromatic rich region and adjacent phosphocholine (POC) binding site, firm binding to the membrane (mainly driven by hydrophobic interactions) accompanied by the transfer of the N-terminal region to the lipid-water interface and finally pore formation after oligomerization of monomers. The polypeptide is Cytolysin tenebrosin-B (Actinia tenebrosa (Australian red waratah sea anemone)).